The following is a 520-amino-acid chain: Bifunctional purine biosynthesis protein PurH (520 aa).

An MGS-like domain is found at 1 to 146 (MAPVALLSVS…KNHADVAVLT (146 aa)).

Belongs to the PurH family.

The enzyme catalyses (6R)-10-formyltetrahydrofolate + 5-amino-1-(5-phospho-beta-D-ribosyl)imidazole-4-carboxamide = 5-formamido-1-(5-phospho-D-ribosyl)imidazole-4-carboxamide + (6S)-5,6,7,8-tetrahydrofolate. It carries out the reaction IMP + H2O = 5-formamido-1-(5-phospho-D-ribosyl)imidazole-4-carboxamide. Its pathway is purine metabolism; IMP biosynthesis via de novo pathway; 5-formamido-1-(5-phospho-D-ribosyl)imidazole-4-carboxamide from 5-amino-1-(5-phospho-D-ribosyl)imidazole-4-carboxamide (10-formyl THF route): step 1/1. It participates in purine metabolism; IMP biosynthesis via de novo pathway; IMP from 5-formamido-1-(5-phospho-D-ribosyl)imidazole-4-carboxamide: step 1/1. The polypeptide is Bifunctional purine biosynthesis protein PurH (Synechococcus sp. (strain CC9902)).